Here is a 915-residue protein sequence, read N- to C-terminus: Metabotropic glutamate receptor 7 (915 aa).

A signal peptide spans 1 to 34 (MVQLRKLLRVLTLMKFPCCVLEVLLCALAAAARG). The Extracellular portion of the chain corresponds to 35-590 (QEMYAPHSIR…IIKLEWHSPW (556 aa)). A disulfide bridge connects residues C67 and C109. A glycan (N-linked (GlcNAc...) asparagine) is linked at N98. L-glutamate is bound by residues S159, 180 to 182 (AST), Y230, and D314. 7 disulfide bridges follow: C249/C541, C374/C390, C430/C437, C523/C542, C527/C545, C548/C560, and C563/C576. Residue K407 coordinates L-glutamate. N-linked (GlcNAc...) asparagine glycans are attached at residues N458 and N486. The N-linked (GlcNAc...) asparagine glycan is linked to N572. The chain crosses the membrane as a helical span at residues 591 to 615 (AVIPVFLAMLGIIATIFVMATFIRY). The Cytoplasmic segment spans residues 616–627 (NDTPIVRASGRE). Residues 628-648 (LSYVLLTGIFLCYIITFLMIA) form a helical membrane-spanning segment. Over 649-654 (KPDVAV) the chain is Extracellular. The helical transmembrane segment at 655 to 675 (CSFRRVFLGLGMCISYAALLT) threads the bilayer. Residues 676 to 702 (KTNRIYRIFEQGKKSVTAPRLISPTSQ) are Cytoplasmic-facing. Residues 703-723 (LAITSSLISVQLLGVFIWFGV) traverse the membrane as a helical segment. The Extracellular portion of the chain corresponds to 724–753 (DPPNIIIDYDEHKTMNPEQARGVLKCDITD). A helical membrane pass occupies residues 754–775 (LQIICSLGYSILLMVTCTVYAI). Over 776-788 (KTRGVPENFNEAK) the chain is Cytoplasmic. Residues 789-810 (PIGFTMYTTCIVWLAFIPIFFG) traverse the membrane as a helical segment. At 811 to 825 (TAQSAEKLYIQTTTL) the chain is on the extracellular side. Residues 826 to 850 (TISMNLSASVALGMLYMPKVYIIIF) traverse the membrane as a helical segment. Over 851–915 (HPELNVQKRK…KYVSYNNLVI (65 aa)) the chain is Cytoplasmic. Residues 874–895 (SRLSHKPSDRPNGEAKTELCEN) form a disordered region. Basic and acidic residues predominate over residues 879–892 (KPSDRPNGEAKTEL). The residue at position 900 (S900) is a Phosphoserine.

The protein belongs to the G-protein coupled receptor 3 family. Homodimer. Interacts with PICK1. In terms of processing, N-glycosylated. As to expression, expressed in many areas of the brain, especially in the cerebral cortex, hippocampus, and cerebellum. Expression of GRM7 isoforms in non-neuronal tissues appears to be restricted to isoform 3 and isoform 4.

It is found in the cell membrane. In terms of biological role, G-protein coupled receptor activated by glutamate that regulates axon outgrowth through the MAPK-cAMP-PKA signaling pathway during neuronal development. Ligand binding causes a conformation change that triggers signaling via guanine nucleotide-binding proteins (G proteins) and modulates the activity of downstream effectors, such as adenylate cyclase that it inhibits. The protein is Metabotropic glutamate receptor 7 (GRM7) of Homo sapiens (Human).